The sequence spans 212 residues: Holliday junction branch migration complex subunit RuvA (212 aa).

The domain I stretch occupies residues 1–63 (MIAKLKGLID…EDAISLFGFL (63 aa)). Residues 64-142 (ETGERDWFRL…KIALGGFSPG (79 aa)) form a domain II region. The flexible linker stretch occupies residues 143-155 (GIKDALSASAPLP). Residues 156–212 (AASGRMEDAVSALVNLGYKRLEAFQAVGETARELGDEADSSALIRAALKHLGKGLLG) are domain III.

It belongs to the RuvA family. In terms of assembly, homotetramer. Forms an RuvA(8)-RuvB(12)-Holliday junction (HJ) complex. HJ DNA is sandwiched between 2 RuvA tetramers; dsDNA enters through RuvA and exits via RuvB. An RuvB hexamer assembles on each DNA strand where it exits the tetramer. Each RuvB hexamer is contacted by two RuvA subunits (via domain III) on 2 adjacent RuvB subunits; this complex drives branch migration. In the full resolvosome a probable DNA-RuvA(4)-RuvB(12)-RuvC(2) complex forms which resolves the HJ.

It localises to the cytoplasm. Functionally, the RuvA-RuvB-RuvC complex processes Holliday junction (HJ) DNA during genetic recombination and DNA repair, while the RuvA-RuvB complex plays an important role in the rescue of blocked DNA replication forks via replication fork reversal (RFR). RuvA specifically binds to HJ cruciform DNA, conferring on it an open structure. The RuvB hexamer acts as an ATP-dependent pump, pulling dsDNA into and through the RuvAB complex. HJ branch migration allows RuvC to scan DNA until it finds its consensus sequence, where it cleaves and resolves the cruciform DNA. The sequence is that of Holliday junction branch migration complex subunit RuvA from Paramagnetospirillum magneticum (strain ATCC 700264 / AMB-1) (Magnetospirillum magneticum).